A 198-amino-acid chain; its full sequence is Holliday junction branch migration complex subunit RuvA (198 aa).

The interval 1 to 64 is domain I; it reads MYEYIKGEYM…EDFIGLYGFE (64 aa). Residues 65–143 are domain II; that stretch reads SLEELDMFKL…SDELLNCIDE (79 aa). Residues 144-154 form a flexible linker region; the sequence is FDDVTQDNSLA. Residues 154–198 are domain III; it reads ALSEALSALISLGYTEKEAEKVLKDVDKSESVENIIKSALVKLMG.

This sequence belongs to the RuvA family. As to quaternary structure, homotetramer. Forms an RuvA(8)-RuvB(12)-Holliday junction (HJ) complex. HJ DNA is sandwiched between 2 RuvA tetramers; dsDNA enters through RuvA and exits via RuvB. An RuvB hexamer assembles on each DNA strand where it exits the tetramer. Each RuvB hexamer is contacted by two RuvA subunits (via domain III) on 2 adjacent RuvB subunits; this complex drives branch migration. In the full resolvosome a probable DNA-RuvA(4)-RuvB(12)-RuvC(2) complex forms which resolves the HJ.

The protein resides in the cytoplasm. In terms of biological role, the RuvA-RuvB-RuvC complex processes Holliday junction (HJ) DNA during genetic recombination and DNA repair, while the RuvA-RuvB complex plays an important role in the rescue of blocked DNA replication forks via replication fork reversal (RFR). RuvA specifically binds to HJ cruciform DNA, conferring on it an open structure. The RuvB hexamer acts as an ATP-dependent pump, pulling dsDNA into and through the RuvAB complex. HJ branch migration allows RuvC to scan DNA until it finds its consensus sequence, where it cleaves and resolves the cruciform DNA. The chain is Holliday junction branch migration complex subunit RuvA from Clostridium botulinum (strain Alaska E43 / Type E3).